The following is a 968-amino-acid chain: RNA polymerase-associated protein RapA (968 aa).

The Helicase ATP-binding domain maps to 163–332; that stretch reads EVGRRYAPRV…FARLRLLDPD (170 aa). 176-183 is an ATP binding site; that stretch reads DEVGLGKT. The short motif at 278–281 is the DEAH box element; the sequence is DEAH. A Helicase C-terminal domain is found at 491-643; it reads RVDWLIAFLK…ELTCPSGHVL (153 aa).

Belongs to the SNF2/RAD54 helicase family. RapA subfamily. In terms of assembly, interacts with the RNAP. Has a higher affinity for the core RNAP than for the holoenzyme. Its ATPase activity is stimulated by binding to RNAP.

Its function is as follows. Transcription regulator that activates transcription by stimulating RNA polymerase (RNAP) recycling in case of stress conditions such as supercoiled DNA or high salt concentrations. Probably acts by releasing the RNAP, when it is trapped or immobilized on tightly supercoiled DNA. Does not activate transcription on linear DNA. Probably not involved in DNA repair. The polypeptide is RNA polymerase-associated protein RapA (Shewanella sp. (strain W3-18-1)).